Here is a 413-residue protein sequence, read N- to C-terminus: Peptidase T (413 aa).

H81 is a Zn(2+) binding site. Residue D83 is part of the active site. D143 is a binding site for Zn(2+). E178 acts as the Proton acceptor in catalysis. Zn(2+)-binding residues include E179, D201, and H383.

Belongs to the peptidase M20B family. In terms of assembly, homodimer. It depends on Zn(2+) as a cofactor.

It is found in the cytoplasm. It catalyses the reaction Release of the N-terminal residue from a tripeptide.. Its activity is regulated as follows. Inhibited by EDTA, by the reducing agents dithiothreitol and 13-mercaptoethanol, and by the divalent cation Cu(2+). In terms of biological role, cleaves the N-terminal amino acid of tripeptides. Has a broad specificity for tripeptides with no clear preference for a particular tripeptide. Tripeptides with proline in the second position are an exception and are not hydrolyzed. Does not hydrolyze dipeptides, tetrapeptides, or oligopeptides. This Lactococcus lactis subsp. cremoris (Streptococcus cremoris) protein is Peptidase T (pepT).